The chain runs to 360 residues: Phospho-N-acetylmuramoyl-pentapeptide-transferase (360 aa).

10 helical membrane-spanning segments follow: residues 27 to 47, 72 to 92, 94 to 114, 132 to 152, 168 to 188, 199 to 219, 235 to 255, 263 to 283, 288 to 308, and 338 to 358; these read IVSL…LIAW, PTMG…MWAY, SNPY…VGFI, WKYF…FAVG, IMPQ…VGTS, GLAI…AWAT, FAGE…GFLW, VFMG…IAVL, FLLL…ILQV, and VIVR…ATLK.

It belongs to the glycosyltransferase 4 family. MraY subfamily. Requires Mg(2+) as cofactor.

The protein localises to the cell inner membrane. The enzyme catalyses UDP-N-acetyl-alpha-D-muramoyl-L-alanyl-gamma-D-glutamyl-meso-2,6-diaminopimeloyl-D-alanyl-D-alanine + di-trans,octa-cis-undecaprenyl phosphate = di-trans,octa-cis-undecaprenyl diphospho-N-acetyl-alpha-D-muramoyl-L-alanyl-D-glutamyl-meso-2,6-diaminopimeloyl-D-alanyl-D-alanine + UMP. Its pathway is cell wall biogenesis; peptidoglycan biosynthesis. In terms of biological role, catalyzes the initial step of the lipid cycle reactions in the biosynthesis of the cell wall peptidoglycan: transfers peptidoglycan precursor phospho-MurNAc-pentapeptide from UDP-MurNAc-pentapeptide onto the lipid carrier undecaprenyl phosphate, yielding undecaprenyl-pyrophosphoryl-MurNAc-pentapeptide, known as lipid I. This chain is Phospho-N-acetylmuramoyl-pentapeptide-transferase, found in Sodalis glossinidius (strain morsitans).